We begin with the raw amino-acid sequence, 324 residues long: Stomatin-like protein stl-1 (324 aa).

It belongs to the band 7/mec-2 family. In terms of tissue distribution, widely expressed in most tissues, including body wall muscles, intestinal epithelia, and pharynx and head neurons.

Its subcellular location is the mitochondrion. Its function is as follows. Mitochondrial protein that probably regulates the biogenesis and the activity of mitochondria. In neurons, involved in mitochondrial fusion and recovery of normal locomotory behavior during reoxygenation; probably acts independently of egl-9 and the canonical hypoxia response pathway. This Caenorhabditis elegans protein is Stomatin-like protein stl-1.